Here is a 324-residue protein sequence, read N- to C-terminus: HTH-type transcriptional regulator CysB (324 aa).

Residues 1 to 59 (MKLQQLRYIVEVVNHNLNVSSTAEGLYTSQPGISKQVRMLEDELGIQIFARSGKHLTQV) form the HTH lysR-type domain. The H-T-H motif DNA-binding region spans 19 to 38 (VSSTAEGLYTSQPGISKQVR).

The protein belongs to the LysR transcriptional regulatory family. As to quaternary structure, homotetramer.

The protein localises to the cytoplasm. Its function is as follows. This protein is a positive regulator of gene expression for the cysteine regulon. The inducer for CysB is N-acetylserine. Thiosulfate and sulfide act as anti-inducers. The protein is HTH-type transcriptional regulator CysB (cysB) of Klebsiella pneumoniae.